A 229-amino-acid polypeptide reads, in one-letter code: Cytochrome c oxidase subunit 2 (229 aa).

Residues 1–26 (MSTWANLGLQDSASPLMEQLIFFHDH) lie on the Mitochondrial intermembrane side of the membrane. The helical transmembrane segment at 27-48 (ALLILVMITILVGYLMFMLFFN) threads the bilayer. Residues 49 to 62 (SYINRFLLHGQLIE) lie on the Mitochondrial matrix side of the membrane. Residues 63–82 (MIWTILPAIILLFIAMPSLR) traverse the membrane as a helical segment. The Mitochondrial intermembrane portion of the chain corresponds to 83–229 (LLYLLDEINE…IKWIASKVNS (147 aa)). 6 residues coordinate Cu cation: histidine 161, cysteine 196, glutamate 198, cysteine 200, histidine 204, and methionine 207. Residue glutamate 198 coordinates Mg(2+).

This sequence belongs to the cytochrome c oxidase subunit 2 family. Component of the cytochrome c oxidase (complex IV, CIV), a multisubunit enzyme composed of a catalytic core of 3 subunits and several supernumerary subunits. The complex exists as a monomer or a dimer and forms supercomplexes (SCs) in the inner mitochondrial membrane with ubiquinol-cytochrome c oxidoreductase (cytochrome b-c1 complex, complex III, CIII). Requires Cu cation as cofactor.

The protein resides in the mitochondrion inner membrane. It catalyses the reaction 4 Fe(II)-[cytochrome c] + O2 + 8 H(+)(in) = 4 Fe(III)-[cytochrome c] + 2 H2O + 4 H(+)(out). Functionally, component of the cytochrome c oxidase, the last enzyme in the mitochondrial electron transport chain which drives oxidative phosphorylation. The respiratory chain contains 3 multisubunit complexes succinate dehydrogenase (complex II, CII), ubiquinol-cytochrome c oxidoreductase (cytochrome b-c1 complex, complex III, CIII) and cytochrome c oxidase (complex IV, CIV), that cooperate to transfer electrons derived from NADH and succinate to molecular oxygen, creating an electrochemical gradient over the inner membrane that drives transmembrane transport and the ATP synthase. Cytochrome c oxidase is the component of the respiratory chain that catalyzes the reduction of oxygen to water. Electrons originating from reduced cytochrome c in the intermembrane space (IMS) are transferred via the dinuclear copper A center (CU(A)) of subunit 2 and heme A of subunit 1 to the active site in subunit 1, a binuclear center (BNC) formed by heme A3 and copper B (CU(B)). The BNC reduces molecular oxygen to 2 water molecules using 4 electrons from cytochrome c in the IMS and 4 protons from the mitochondrial matrix. This Drosophila bifasciata (Fruit fly) protein is Cytochrome c oxidase subunit 2 (mt:CoII).